Consider the following 332-residue polypeptide: Potassium channel subfamily K member 17 (332 aa).

Topologically, residues 1 to 20 (MYRPRARAAPEGRVRGCAVP) are cytoplasmic. Residues 21 to 43 (STVLLLLAYLAYLALGTGVFWTL) form a helical membrane-spanning segment. N-linked (GlcNAc...) asparagine glycosylation is found at Asn-65 and Asn-94. The pore-forming intramembrane region spans 106–124 (SFFFSVSTITTIGYGNLSP). Residues Thr-116, Ile-117, Gly-118, and Tyr-119 each contribute to the K(+) site. Residues 116-121 (TIGYGN) are selectivity filter 1. Residues 128–148 (AARLFCIFFALVGIPLNLVVL) traverse the membrane as a helical segment. At 149 to 179 (NRLGHLMQQGVNHWASRLGGTWQDPDKARWL) the chain is on the cytoplasmic side. Residues 180–200 (AGSGALLSGLLLFLLLPPLLF) traverse the membrane as a helical segment. Residues 211–230 (GFYFAFITLSTVGFGDYVIG) constitute an intramembrane region (pore-forming). K(+) is bound by residues Thr-221, Val-222, Gly-223, and Phe-224. A selectivity filter 2 region spans residues 221 to 226 (TVGFGD). Residues 244–264 (MVSLWILFGMAWLALIIKLIL) traverse the membrane as a helical segment. Residues 265 to 332 (SQLETPGRVC…AHAAGCGKDS (68 aa)) are Cytoplasmic-facing. A disordered region spans residues 287–312 (SQSWRQGPDREPESHSPQQGCYPEGP).

It belongs to the two pore domain potassium channel (TC 1.A.1.8) family. In terms of assembly, homodimer; disulfide-linked. Heterodimer with KCNK5 and KCNK16. Widely expressed. Highly expressed in aorta and coronary artery. Expressed in pancreas, in both endocrine (alpha, beta, gamma, delta, and epsilon) and exocrine (acinar and ductal) cells.

Its subcellular location is the cell membrane. It catalyses the reaction K(+)(in) = K(+)(out). The enzyme catalyses Rb(+)(in) = Rb(+)(out). It carries out the reaction Cs(+)(in) = Cs(+)(out). Its activity is regulated as follows. Inhibited by Ba(2+), quinidine, chloroform and halothane. Activated at alkaline pH. Activated by quinine and isoflurane. K(+) channel that conducts voltage-dependent outward rectifying currents upon membrane depolarization. Voltage sensing is coupled to K(+) electrochemical gradient in an 'ion flux gating' mode where outward but not inward ion flow opens the gate. Homo- and heterodimerizes to form functional channels with distinct regulatory and gating properties. Present in the cardiac conduction system where it may regulate action potential duration and beating frequency of cardiac myocytes. Permeable to other monovalent cations such as Rb(+) and Cs(+). The polypeptide is Potassium channel subfamily K member 17 (Homo sapiens (Human)).